A 633-amino-acid chain; its full sequence is Putative serine/threonine-protein kinase L232 (633 aa).

The 305-residue stretch at 10 to 314 folds into the Protein kinase domain; that stretch reads YTIVDKLSEG…QSRKLFYEIL (305 aa). ATP is bound by residues 16–24 and K39; that span reads LSEGTYGIV. D133 acts as the Proton acceptor in catalysis.

This sequence belongs to the protein kinase superfamily. Ser/Thr protein kinase family.

The catalysed reaction is L-seryl-[protein] + ATP = O-phospho-L-seryl-[protein] + ADP + H(+). The enzyme catalyses L-threonyl-[protein] + ATP = O-phospho-L-threonyl-[protein] + ADP + H(+). This chain is Putative serine/threonine-protein kinase L232, found in Acanthamoeba polyphaga mimivirus (APMV).